The chain runs to 244 residues: 1-(5-phosphoribosyl)-5-[(5-phosphoribosylamino)methylideneamino] imidazole-4-carboxamide isomerase (244 aa).

Catalysis depends on Asp-8, which acts as the Proton acceptor. Asp-129 serves as the catalytic Proton donor.

Belongs to the HisA/HisF family.

The protein localises to the cytoplasm. It catalyses the reaction 1-(5-phospho-beta-D-ribosyl)-5-[(5-phospho-beta-D-ribosylamino)methylideneamino]imidazole-4-carboxamide = 5-[(5-phospho-1-deoxy-D-ribulos-1-ylimino)methylamino]-1-(5-phospho-beta-D-ribosyl)imidazole-4-carboxamide. It functions in the pathway amino-acid biosynthesis; L-histidine biosynthesis; L-histidine from 5-phospho-alpha-D-ribose 1-diphosphate: step 4/9. In Thermodesulfovibrio yellowstonii (strain ATCC 51303 / DSM 11347 / YP87), this protein is 1-(5-phosphoribosyl)-5-[(5-phosphoribosylamino)methylideneamino] imidazole-4-carboxamide isomerase.